We begin with the raw amino-acid sequence, 1024 residues long: SAC3 family protein 1 (1024 aa).

The interval 1–62 (MEKRNETGNN…QDSRQKRFSS (62 aa)) is disordered. Residues 11–21 (RLKRSNNRGKS) are compositionally biased toward basic residues. Residues 22-38 (KKDWKDASVETTPRETS) are compositionally biased toward basic and acidic residues. A compositionally biased stretch (acidic residues) spans 39–52 (VDEDNTSVFEDVEA). Residues 243-433 (EVEQLRKGIL…NKTAFFNDSK (191 aa)) enclose the PCI domain. Serine 841 carries the phosphoserine modification. A coiled-coil region spans residues 945 to 1022 (AQLEELEVVR…ARDLLKKVET (78 aa)).

This sequence belongs to the SAC3 family.

The protein localises to the cytoplasm. The protein resides in the nucleus envelope. The polypeptide is SAC3 family protein 1 (Schizosaccharomyces pombe (strain 972 / ATCC 24843) (Fission yeast)).